The sequence spans 561 residues: Small ribosomal subunit protein bS1 (561 aa).

S1 motif domains are found at residues 22 to 88, 106 to 172, 193 to 261, 278 to 348, 365 to 435, and 452 to 521; these read GEVI…LSRE, GDIL…VSRR, GSVI…LGMK, GTRL…LGMK, GDKI…LGIK, and GSLV…LSVK.

Belongs to the bacterial ribosomal protein bS1 family.

Its function is as follows. Binds mRNA; thus facilitating recognition of the initiation point. It is needed to translate mRNA with a short Shine-Dalgarno (SD) purine-rich sequence. The polypeptide is Small ribosomal subunit protein bS1 (rpsA) (Neisseria meningitidis serogroup B (strain ATCC BAA-335 / MC58)).